We begin with the raw amino-acid sequence, 122 residues long: LYR motif-containing protein 1 (122 aa).

The protein belongs to the complex I LYR family.

Functionally, may promote cell proliferation and inhibition of apoptosis of preadipocytes. The sequence is that of LYR motif-containing protein 1 (Lyrm1) from Mus musculus (Mouse).